Reading from the N-terminus, the 463-residue chain is uncharacterized protein (463 aa).

Transmembrane regions (helical) follow at residues 3–23 (IPPEVHSGLLSAGCGPGSLLV), 88–108 (VAAAAAYCSALAAMPTPAELA), 112–132 (AIHGVLIATNFFGINTVPIAL), 216–236 (FSPAVTVVLALVALQLYDFLW), 245–265 (LLLLPFFTPTLSALTALSALI), and 276–296 (LPIAAALGPGDQWGANLAVAV). The interval 303-322 (VPGGSPPTSNPAPAAPSSNS) is disordered. Over residues 306 to 316 (GSPPTSNPAPA) the composition is skewed to pro residues. A run of 2 helical transmembrane segments spans residues 323–343 (VGSASAAPGISYAVPGLAPPG) and 419–439 (AGTLGFAGTAPTTSGAAAGMV).

Belongs to the mycobacterial PPE family.

It localises to the cell membrane. This is an uncharacterized protein from Mycobacterium tuberculosis (strain CDC 1551 / Oshkosh).